Here is a 350-residue protein sequence, read N- to C-terminus: Galactokinase (350 aa).

14 to 17 contributes to the substrate binding site; the sequence is EHTD. Residues serine 46 and 98-104 contribute to the ATP site; that span reads GSGLSSS. Mg(2+) is bound by residues serine 104 and glutamate 136. The Proton acceptor role is filled by aspartate 148. Tyrosine 197 contributes to the substrate binding site.

Belongs to the GHMP kinase family. GalK subfamily.

The protein localises to the cytoplasm. It carries out the reaction alpha-D-galactose + ATP = alpha-D-galactose 1-phosphate + ADP + H(+). It participates in carbohydrate metabolism; galactose metabolism. Catalyzes the transfer of the gamma-phosphate of ATP to D-galactose to form alpha-D-galactose-1-phosphate (Gal-1-P). The chain is Galactokinase from Thermococcus kodakarensis (strain ATCC BAA-918 / JCM 12380 / KOD1) (Pyrococcus kodakaraensis (strain KOD1)).